The following is a 92-amino-acid chain: Precursor of CEP12 (92 aa).

A signal peptide spans 1-30 (MVNRDNSIVALSFFMLFLLVLHLHFETTTA). Residues 31–70 (ARKPVRVFGPPSSIEWSPPSPPKDDFEWFEINIYKNIEQT) constitute a propeptide that is removed on maturation. Residues 70–92 (TAFRPTGQGPSQGIGHKDPPGAP) form a disordered region. A hydroxyproline mark is found at Pro74 and Pro79. A propeptide spanning residues 86–92 (KDPPGAP) is cleaved from the precursor.

This sequence belongs to the C-terminally encoded plant signaling peptide (CEP) family. In terms of assembly, interacts with CEP receptors (e.g. CEPR1 and CEPR2). Post-translationally, the mature small signaling peptide is generated by proteolytic processing of the longer precursor.

The protein resides in the secreted. It localises to the extracellular space. It is found in the apoplast. In terms of biological role, extracellular signaling peptide that may regulate primary root growth rate and systemic nitrogen (N)-demand signaling. In Arabidopsis thaliana (Mouse-ear cress), this protein is Precursor of CEP12.